Here is a 355-residue protein sequence, read N- to C-terminus: Glucose-1-phosphate thymidylyltransferase (355 aa).

The Mg(2+) site is built by aspartate 107 and aspartate 220.

Belongs to the glucose-1-phosphate thymidylyltransferase family. Mg(2+) is required as a cofactor.

It carries out the reaction dTTP + alpha-D-glucose 1-phosphate + H(+) = dTDP-alpha-D-glucose + diphosphate. Its pathway is antibiotic biosynthesis; streptomycin biosynthesis. Its function is as follows. Involved in the biosynthesis of the streptose moiety of streptomycin. Catalyzes the formation of dTDP-glucose, from dTTP and glucose 1-phosphate, as well as its pyrophosphorolysis. The chain is Glucose-1-phosphate thymidylyltransferase (strD) from Streptomyces griseus.